The primary structure comprises 689 residues: Elongation factor G (689 aa).

Residues Asp-8–Leu-282 enclose the tr-type G domain. GTP contacts are provided by residues Ala-17 to Thr-24, Asp-81 to His-85, and Asn-135 to Asp-138.

This sequence belongs to the TRAFAC class translation factor GTPase superfamily. Classic translation factor GTPase family. EF-G/EF-2 subfamily.

Its subcellular location is the cytoplasm. Its function is as follows. Catalyzes the GTP-dependent ribosomal translocation step during translation elongation. During this step, the ribosome changes from the pre-translocational (PRE) to the post-translocational (POST) state as the newly formed A-site-bound peptidyl-tRNA and P-site-bound deacylated tRNA move to the P and E sites, respectively. Catalyzes the coordinated movement of the two tRNA molecules, the mRNA and conformational changes in the ribosome. In Thermoanaerobacter pseudethanolicus (strain ATCC 33223 / 39E) (Clostridium thermohydrosulfuricum), this protein is Elongation factor G.